The chain runs to 268 residues: Energy-coupling factor transporter transmembrane protein EcfT (268 aa).

Helical transmembrane passes span 28-48 (FVFL…YLWV), 63-83 (LWFL…TLMM), 107-127 (ILEG…ATIM), 152-172 (LPVH…PTLM), and 248-268 (ISLT…YSGV).

It belongs to the energy-coupling factor EcfT family. In terms of assembly, forms a stable energy-coupling factor (ECF) transporter complex composed of 2 membrane-embedded substrate-binding proteins (S component), 2 ATP-binding proteins (A component) and 2 transmembrane proteins (T component). May be able to interact with more than 1 S component at a time.

The protein localises to the cell membrane. In terms of biological role, transmembrane (T) component of an energy-coupling factor (ECF) ABC-transporter complex. Unlike classic ABC transporters this ECF transporter provides the energy necessary to transport a number of different substrates. The sequence is that of Energy-coupling factor transporter transmembrane protein EcfT from Staphylococcus aureus (strain 04-02981).